Reading from the N-terminus, the 285-residue chain is HTH-type transcriptional regulator MurR (285 aa).

The HTH rpiR-type domain occupies 1–77 (MLYLTKIRNA…MALIGEYSAS (77 aa)). A DNA-binding region (H-T-H motif) is located at residues 37–56 (SRQMAKQLGISQSSIVKFAQ). Residues 128 to 268 (IIEVISKAPF…FVGLVQLNDV (141 aa)) form the SIS domain.

In terms of assembly, homotetramer.

The protein operates within amino-sugar metabolism; N-acetylmuramate degradation [regulation]. In terms of biological role, represses the expression of the murPQ operon involved in the uptake and degradation of N-acetylmuramic acid (MurNAc). Binds to two adjacent inverted repeats within the operator region. MurNAc 6-phosphate, the substrate of MurQ, is the specific inducer that weakens binding of MurR to the operator. This is HTH-type transcriptional regulator MurR from Escherichia coli (strain ATCC 8739 / DSM 1576 / NBRC 3972 / NCIMB 8545 / WDCM 00012 / Crooks).